We begin with the raw amino-acid sequence, 426 residues long: Glutamate-1-semialdehyde 2,1-aminomutase (426 aa).

N6-(pyridoxal phosphate)lysine is present on Lys-265.

It belongs to the class-III pyridoxal-phosphate-dependent aminotransferase family. HemL subfamily. As to quaternary structure, homodimer. It depends on pyridoxal 5'-phosphate as a cofactor.

It is found in the cytoplasm. The enzyme catalyses (S)-4-amino-5-oxopentanoate = 5-aminolevulinate. The protein operates within porphyrin-containing compound metabolism; protoporphyrin-IX biosynthesis; 5-aminolevulinate from L-glutamyl-tRNA(Glu): step 2/2. This is Glutamate-1-semialdehyde 2,1-aminomutase from Yersinia pseudotuberculosis serotype O:1b (strain IP 31758).